A 517-amino-acid polypeptide reads, in one-letter code: NEDD8-activating enzyme E1 regulatory subunit (517 aa).

The protein belongs to the ubiquitin-activating E1 family. ULA1 subfamily. Heterodimer of uba3 and ula1. The complex binds NEDD8/ubl1 and ubc12.

It localises to the cytoplasm. Its subcellular location is the nucleus. The protein operates within protein modification; protein neddylation. Regulatory subunit of the dimeric uba3-ula1 E1 enzyme. E1 activates NEDD8/ubl1 by first adenylating its C-terminal glycine residue with ATP, thereafter linking this residue to the side chain of the catalytic cysteine, yielding a NEDD8-UBA3 thioester and free AMP. E1 finally transfers NEDD8 to the catalytic cysteine of ubc12. In Schizosaccharomyces pombe (strain 972 / ATCC 24843) (Fission yeast), this protein is NEDD8-activating enzyme E1 regulatory subunit (uba5).